We begin with the raw amino-acid sequence, 342 residues long: Uroporphyrinogen decarboxylase (342 aa).

Substrate contacts are provided by residues 26 to 30 (RQAGR), aspartate 76, tyrosine 150, serine 205, and histidine 321.

This sequence belongs to the uroporphyrinogen decarboxylase family. As to quaternary structure, homodimer.

The protein resides in the cytoplasm. It catalyses the reaction uroporphyrinogen III + 4 H(+) = coproporphyrinogen III + 4 CO2. The protein operates within porphyrin-containing compound metabolism; protoporphyrin-IX biosynthesis; coproporphyrinogen-III from 5-aminolevulinate: step 4/4. Functionally, catalyzes the decarboxylation of four acetate groups of uroporphyrinogen-III to yield coproporphyrinogen-III. The protein is Uroporphyrinogen decarboxylase of Sphingopyxis alaskensis (strain DSM 13593 / LMG 18877 / RB2256) (Sphingomonas alaskensis).